Here is a 349-residue protein sequence, read N- to C-terminus: Putative transport protein YhhT (349 aa).

The Cytoplasmic segment spans residues 1 to 10 (METPQPDKTG). The chain crosses the membrane as a helical span at residues 11–31 (MHILLKLASLVVILAGIHAAA). Position 32 (D32) is a topological domain, periplasmic. Residues 33–53 (IIVQLLLALFFAIVLNPLVTW) traverse the membrane as a helical segment. Over 54–62 (FIRRGVQRP) the chain is Cytoplasmic. A helical transmembrane segment spans residues 63–83 (VAITIVVVVMLIALTALVGVL). Over 84-142 (AASFNEFISMLPKFNKELTRKLFKLQEMLPFLNLHMSPERMLQRMDSEKVVTFTTALMT) the chain is Periplasmic. The chain crosses the membrane as a helical span at residues 143–163 (GLSGAMASVLLLVMTVVFMLF). Over 164-208 (EVRHVPYKMRFALNNPQIHIAGLHRALKGVSHYLALKTLLSLWTG) the chain is Cytoplasmic. The helical transmembrane segment at 209–229 (VIVWLGLELMGVQFALMWAVL) threads the bilayer. The Periplasmic segment spans residues 230–234 (AFLLN). Residues 235–255 (YVPNIGAVISAVPPMIQVLLF) traverse the membrane as a helical segment. Residues 256–257 (NG) lie on the Cytoplasmic side of the membrane. Residues 258 to 278 (VYECILVGALFLVVHMVIGNI) traverse the membrane as a helical segment. The Periplasmic segment spans residues 279–292 (LEPRMMGHRLGMST). Residues 293-313 (MVVFLSLLIWGWLLGPVGMLL) form a helical membrane-spanning segment. Topologically, residues 314 to 349 (SVPLTSVCKIWMETTKGGSKLAILLGPGRPKSRLPG) are cytoplasmic.

This sequence belongs to the autoinducer-2 exporter (AI-2E) (TC 2.A.86) family.

The protein localises to the cell inner membrane. The chain is Putative transport protein YhhT (yhhT) from Escherichia coli O157:H7.